The following is a 1094-amino-acid chain: Probable arabinosyltransferase C (1094 aa).

Helical transmembrane passes span isoleucine 28 to leucine 50, alanine 232 to leucine 251, proline 264 to phenylalanine 286, serine 341 to serine 360, threonine 373 to leucine 392, isoleucine 431 to isoleucine 453, arginine 466 to phenylalanine 488, serine 530 to leucine 552, serine 565 to threonine 582, tryptophan 586 to valine 608, threonine 620 to tyrosine 642, tryptophan 657 to phenylalanine 679, and leucine 700 to serine 722. Over residues glycine 817–glycine 831 the composition is skewed to low complexity. The segment at glycine 817–arginine 836 is disordered.

The protein belongs to the emb family.

It is found in the cell membrane. Its function is as follows. Arabinosyl transferase responsible for the polymerization of arabinose into the arabinan of arabinogalactan. This chain is Probable arabinosyltransferase C (embC), found in Mycobacterium tuberculosis (strain ATCC 25618 / H37Rv).